We begin with the raw amino-acid sequence, 242 residues long: MTHSPLAQFDIKKLIDIKMFGFDVSFTNSSIYMLLASILALTYFYLAFYNRKLVPSRLQVSAEIVYNLVADMLNQNIGVKGRKFIPLVFSLFIFILFCNLLGMTPYSFTATSHIIVTFTLAILVFLTVTIVGFVKHGLRFLTLFLPHGTPLWLAPLMIVIELFTYLARPVSLSLRLAANMMAGHVLLKVIAGFTVSLMIYLKFLPIPLMVILIGFEIFVAILQAYIFTILSCMYLNDAINLH.

Helical transmembrane passes span 29-49, 84-104, 114-134, 140-160, 189-209, and 210-230; these read SSIY…LAFY, FIPL…LGMT, IIVT…VGFV, FLTL…MIVI, VIAG…IPLM, and VILI…FTIL.

It belongs to the ATPase A chain family. As to quaternary structure, F-type ATPases have 2 components, CF(1) - the catalytic core - and CF(0) - the membrane proton channel. CF(1) has five subunits: alpha(3), beta(3), gamma(1), delta(1), epsilon(1). CF(0) has three main subunits: a(1), b(2) and c(9-12). The alpha and beta chains form an alternating ring which encloses part of the gamma chain. CF(1) is attached to CF(0) by a central stalk formed by the gamma and epsilon chains, while a peripheral stalk is formed by the delta and b chains.

It localises to the cell inner membrane. In terms of biological role, key component of the proton channel; it plays a direct role in the translocation of protons across the membrane. In Rickettsia felis (strain ATCC VR-1525 / URRWXCal2) (Rickettsia azadi), this protein is ATP synthase subunit a.